Consider the following 108-residue polypeptide: Small ribosomal subunit protein bS6 (108 aa).

This sequence belongs to the bacterial ribosomal protein bS6 family.

Binds together with bS18 to 16S ribosomal RNA. The protein is Small ribosomal subunit protein bS6 of Dichelobacter nodosus (strain VCS1703A).